A 204-amino-acid polypeptide reads, in one-letter code: Peptidyl-prolyl cis-trans isomerase CYP20-1 (204 aa).

Positions 1–23 (MASSVTLLLWSLLLLGTLSAIQA) are cleaved as a signal peptide. In terms of domain architecture, PPIase cyclophilin-type spans 38 to 201 (YFDVEIDGKA…SKVVIVDSGE (164 aa)).

It belongs to the cyclophilin-type PPIase family. As to quaternary structure, interacts with the PP2A A subunit PP2AA1/RCN1. In terms of tissue distribution, ubiquitous, mostly in aerial organs. Higher levels in leaf and buds, and lower levels in seedlings.

The protein resides in the endoplasmic reticulum. The protein localises to the secreted. The enzyme catalyses [protein]-peptidylproline (omega=180) = [protein]-peptidylproline (omega=0). With respect to regulation, binds cyclosporin A (CsA). CsA mediates some of its effects via an inhibitory action on PPIase. Functionally, PPIases accelerate the folding of proteins. It catalyzes the cis-trans isomerization of proline imidic peptide bonds in oligopeptides. Seems to be involved in root development. In Arabidopsis thaliana (Mouse-ear cress), this protein is Peptidyl-prolyl cis-trans isomerase CYP20-1 (CYP20-1).